The chain runs to 202 residues: Oocyte-secreted protein 1 (202 aa).

The first 21 residues, 1-21 (MKPFVGLLGLLLLLSFMKTCA), serve as a signal peptide directing secretion. Residues 157–183 (QPNLSTSSEDHHVSTEPWASETSRSEA) are disordered.

It belongs to the PLAC1 family. As to expression, expressed in oocytes in primary through antral-stage follicles. Expressed in liver and ovary.

The protein resides in the secreted. Functionally, may be involved in cell differentiation. The polypeptide is Oocyte-secreted protein 1 (Oosp1) (Mus musculus (Mouse)).